The following is a 173-amino-acid chain: Large ribosomal subunit protein uL10 (173 aa).

Belongs to the universal ribosomal protein uL10 family. In terms of assembly, part of the ribosomal stalk of the 50S ribosomal subunit. The N-terminus interacts with L11 and the large rRNA to form the base of the stalk. The C-terminus forms an elongated spine to which L12 dimers bind in a sequential fashion forming a multimeric L10(L12)X complex.

In terms of biological role, forms part of the ribosomal stalk, playing a central role in the interaction of the ribosome with GTP-bound translation factors. The sequence is that of Large ribosomal subunit protein uL10 from Maridesulfovibrio salexigens (strain ATCC 14822 / DSM 2638 / NCIMB 8403 / VKM B-1763) (Desulfovibrio salexigens).